The chain runs to 76 residues: Dermaseptin-H1 (76 aa).

A signal peptide spans 1–22 (MDILKKSLFIVLFLGLVSLSIC). The propeptide occupies 23 to 45 (EEEKRENEDEEEQEDDEQSEEKR). A disordered region spans residues 25 to 44 (EKRENEDEEEQEDDEQSEEK). A compositionally biased stretch (acidic residues) spans 30–41 (EDEEEQEDDEQS). Residue Gln73 is modified to Glutamine amide. A propeptide spanning residues 75–76 (EQ) is cleaved from the precursor.

In terms of tissue distribution, expressed by the skin glands.

It localises to the secreted. Has antimicrobial activity. The sequence is that of Dermaseptin-H1 from Pithecopus hypochondrialis (Orange-legged leaf frog).